A 104-amino-acid chain; its full sequence is Large ribosomal subunit protein bL21 (104 aa).

Belongs to the bacterial ribosomal protein bL21 family. In terms of assembly, part of the 50S ribosomal subunit. Contacts protein L20.

In terms of biological role, this protein binds to 23S rRNA in the presence of protein L20. The protein is Large ribosomal subunit protein bL21 of Clostridium tetani (strain Massachusetts / E88).